A 441-amino-acid chain; its full sequence is Homogentisate 1,2-dioxygenase (441 aa).

Residue His-297 is the Proton acceptor of the active site. Positions 340 and 346 each coordinate Fe cation. Homogentisate contacts are provided by Tyr-355 and His-376. His-376 contacts Fe cation.

It belongs to the homogentisate dioxygenase family. Hexamer; dimer of trimers. The cofactor is Fe cation.

It catalyses the reaction homogentisate + O2 = 4-maleylacetoacetate + H(+). It participates in amino-acid degradation; L-phenylalanine degradation; acetoacetate and fumarate from L-phenylalanine: step 4/6. In terms of biological role, involved in the catabolism of homogentisate (2,5-dihydroxyphenylacetate or 2,5-OH-PhAc), a central intermediate in the degradation of phenylalanine and tyrosine. Catalyzes the oxidative ring cleavage of the aromatic ring of homogentisate to yield maleylacetoacetate. The chain is Homogentisate 1,2-dioxygenase from Streptomyces coelicolor (strain ATCC BAA-471 / A3(2) / M145).